The sequence spans 229 residues: Ribulose-phosphate 3-epimerase (229 aa).

Ser13 contributes to the substrate binding site. Positions 36, 38, and 69 each coordinate a divalent metal cation. Asp38 functions as the Proton acceptor in the catalytic mechanism. Residues His69, 145–148 (GFGG), 178–180 (DGG), and 200–201 (GS) each bind substrate. Asp178 serves as a coordination point for a divalent metal cation. Asp178 functions as the Proton donor in the catalytic mechanism.

The protein belongs to the ribulose-phosphate 3-epimerase family. A divalent metal cation serves as cofactor.

It catalyses the reaction D-ribulose 5-phosphate = D-xylulose 5-phosphate. It functions in the pathway carbohydrate degradation. Functionally, catalyzes the reversible epimerization of D-ribulose 5-phosphate to D-xylulose 5-phosphate. This chain is Ribulose-phosphate 3-epimerase, found in Mycobacterium bovis (strain ATCC BAA-935 / AF2122/97).